Here is a 353-residue protein sequence, read N- to C-terminus: Tetraacyldisaccharide 4'-kinase (353 aa).

49–56 contacts ATP; the sequence is TAGGTGKT.

This sequence belongs to the LpxK family.

The enzyme catalyses a lipid A disaccharide + ATP = a lipid IVA + ADP + H(+). It functions in the pathway glycolipid biosynthesis; lipid IV(A) biosynthesis; lipid IV(A) from (3R)-3-hydroxytetradecanoyl-[acyl-carrier-protein] and UDP-N-acetyl-alpha-D-glucosamine: step 6/6. In terms of biological role, transfers the gamma-phosphate of ATP to the 4'-position of a tetraacyldisaccharide 1-phosphate intermediate (termed DS-1-P) to form tetraacyldisaccharide 1,4'-bis-phosphate (lipid IVA). The chain is Tetraacyldisaccharide 4'-kinase from Chlorobium phaeovibrioides (strain DSM 265 / 1930) (Prosthecochloris vibrioformis (strain DSM 265)).